Reading from the N-terminus, the 319-residue chain is Methionyl-tRNA formyltransferase (319 aa).

116–119 (SLLP) contributes to the (6S)-5,6,7,8-tetrahydrofolate binding site.

Belongs to the Fmt family.

The catalysed reaction is L-methionyl-tRNA(fMet) + (6R)-10-formyltetrahydrofolate = N-formyl-L-methionyl-tRNA(fMet) + (6S)-5,6,7,8-tetrahydrofolate + H(+). Functionally, attaches a formyl group to the free amino group of methionyl-tRNA(fMet). The formyl group appears to play a dual role in the initiator identity of N-formylmethionyl-tRNA by promoting its recognition by IF2 and preventing the misappropriation of this tRNA by the elongation apparatus. In Treponema pallidum (strain Nichols), this protein is Methionyl-tRNA formyltransferase.